The following is a 227-amino-acid chain: Orotidine 5'-phosphate decarboxylase (227 aa).

Substrate-binding positions include aspartate 8, lysine 30, 58 to 67 (DLKLYDIPNT), threonine 117, arginine 177, glutamine 186, glycine 206, and arginine 207. Catalysis depends on lysine 60, which acts as the Proton donor.

It belongs to the OMP decarboxylase family. Type 1 subfamily. As to quaternary structure, homodimer.

It carries out the reaction orotidine 5'-phosphate + H(+) = UMP + CO2. Its pathway is pyrimidine metabolism; UMP biosynthesis via de novo pathway; UMP from orotate: step 2/2. Catalyzes the decarboxylation of orotidine 5'-monophosphate (OMP) to uridine 5'-monophosphate (UMP). The polypeptide is Orotidine 5'-phosphate decarboxylase (Campylobacter lari (strain RM2100 / D67 / ATCC BAA-1060)).